Reading from the N-terminus, the 604-residue chain is Protein TAX4 (604 aa).

Disordered regions lie at residues His38–Ile77, Phe133–Glu249, Gly267–Leu300, Asp338–Lys380, and Pro394–Lys428. The span at Tyr176–Ile185 shows a compositional bias: polar residues. Composition is skewed to low complexity over residues Ser186–Ser203 and Ser224–Leu240. Composition is skewed to basic residues over residues Ser276–Leu290, Lys366–Leu379, and Pro396–Ser421. Residues Ala469 to Val559 form the EH domain.

Belongs to the IRS4 family. Interacts with INP51.

Its function is as follows. With IRS4, acts as a positive regulator of INP51 activity and phosphatidylinositol 4,5-bisphosphate turnover. Negatively regulates signaling through the cell integrity pathway, including the MAP kinase SLT2. In Saccharomyces cerevisiae (strain YJM789) (Baker's yeast), this protein is Protein TAX4 (TAX4).